The chain runs to 798 residues: Penicillin-binding protein 1A (798 aa).

At 2–9 the chain is on the cytoplasmic side; it reads IKKILTTC. A helical; Signal-anchor for type II membrane protein transmembrane segment spans residues 10-30; it reads FGLFFGFCVFGVGLVAIAILV. Residues 31-798 are Periplasmic-facing; that stretch reads TYPKLPSLDS…SKQQQLDSLF (768 aa). Positions 50 to 218 are transglycosylase; it reads LTIYSADGEV…SAYNPIVNPE (169 aa). Glutamate 88 serves as the catalytic Proton donor; for transglycosylase activity. Residues 378–700 form a transpeptidase region; the sequence is RRALGFAARA…GTIAVPVWVD (323 aa). Serine 461 serves as the catalytic Acyl-ester intermediate; for transpeptidase activity. Positions 739-798 are disordered; that stretch reads LMLDNSGIAPQPSRRAKEDDEAAVENEQQGRSDETRQDVQETPVLPSNTDSKQQQLDSLF. A compositionally biased stretch (basic and acidic residues) spans 766 to 777; that stretch reads QQGRSDETRQDV. Positions 783 to 798 are enriched in polar residues; it reads LPSNTDSKQQQLDSLF.

In the N-terminal section; belongs to the glycosyltransferase 51 family. It in the C-terminal section; belongs to the transpeptidase family.

The protein resides in the cell inner membrane. It catalyses the reaction [GlcNAc-(1-&gt;4)-Mur2Ac(oyl-L-Ala-gamma-D-Glu-L-Lys-D-Ala-D-Ala)](n)-di-trans,octa-cis-undecaprenyl diphosphate + beta-D-GlcNAc-(1-&gt;4)-Mur2Ac(oyl-L-Ala-gamma-D-Glu-L-Lys-D-Ala-D-Ala)-di-trans,octa-cis-undecaprenyl diphosphate = [GlcNAc-(1-&gt;4)-Mur2Ac(oyl-L-Ala-gamma-D-Glu-L-Lys-D-Ala-D-Ala)](n+1)-di-trans,octa-cis-undecaprenyl diphosphate + di-trans,octa-cis-undecaprenyl diphosphate + H(+). The catalysed reaction is Preferential cleavage: (Ac)2-L-Lys-D-Ala-|-D-Ala. Also transpeptidation of peptidyl-alanyl moieties that are N-acyl substituents of D-alanine.. The protein operates within cell wall biogenesis; peptidoglycan biosynthesis. Cell wall formation. Synthesis of cross-linked peptidoglycan from the lipid intermediates. The enzyme has a penicillin-insensitive transglycosylase N-terminal domain (formation of linear glycan strands) and a penicillin-sensitive transpeptidase C-terminal domain (cross-linking of the peptide subunits). Essential for cell wall synthesis. This is Penicillin-binding protein 1A (mrcA) from Neisseria gonorrhoeae (strain ATCC 700825 / FA 1090).